The following is a 198-amino-acid chain: Na(+)-translocating NADH-quinone reductase subunit E (198 aa).

6 helical membrane-spanning segments follow: residues 11–31 (SIFI…FLAV), 39–59 (FGLG…NNLV), 77–97 (FLNF…LEMV), 110–130 (GIFL…SFMV), 140–160 (IVYG…LAGI), and 176–196 (LGIT…FSGV).

Belongs to the NqrDE/RnfAE family. In terms of assembly, composed of six subunits; NqrA, NqrB, NqrC, NqrD, NqrE and NqrF. In terms of processing, the N-terminus is blocked.

Its subcellular location is the cell inner membrane. The catalysed reaction is a ubiquinone + n Na(+)(in) + NADH + H(+) = a ubiquinol + n Na(+)(out) + NAD(+). This reaction is tightly coupled to the Na(+) pumping activity and specifically requires Na(+) for activity. Inhibited by korormicin and 2-N-heptyl-4-hydroxyquinoline N-oxide (HQNO). Its function is as follows. NQR complex catalyzes the reduction of ubiquinone-1 to ubiquinol by two successive reactions, coupled with the transport of Na(+) ions from the cytoplasm to the periplasm. NqrA to NqrE are probably involved in the second step, the conversion of ubisemiquinone to ubiquinol. The protein is Na(+)-translocating NADH-quinone reductase subunit E of Vibrio alginolyticus.